Reading from the N-terminus, the 514-residue chain is MQQLNPSEISEIIKGRIEKLDVTSQARNEGTVVSVSDGIVRIHGLADVMYGEMIEFPGGVYGMALNLEQDSVGAVVLGAYTSLAEGMSAKCTGRILEVPVGKELLGRVVDALGNPVDGKGPLNNTETDAVEKVAPGVIWRKSVDQPVQTGYKAVDAMIPVGRGQRELIIGDRQIGKTALAIDAIINQKDSGIFCVYVAIGQKQSTIANVVRKLEENGALANTIIVAASASESAALQFLAPYSGCTMGEYFRDRGEDALIVYDDLSKQAVAYRQISLLLRRPPGREAYPGDVFYLHSRLLERASRVSEEYVEKFTNGAVTGKTGSLTALPIIETQAGDVSAFVPTNVISITDGQIFLESAMFNSGIRPAVNAGVSVSRVGGAAQTKIIKKLSGGIRTALAQYRELAAFAQFASDLDEATRKQLEHGQRVTELMKQKQYAPMSIADMSLSLYAAERGFLTDVEIAKVGSFEQAMIAYFNRDHADLMAKINVKGDFNDEIDAGLKAGIEKFKATQTW.

170–177 (GDRQIGKT) is an ATP binding site.

This sequence belongs to the ATPase alpha/beta chains family. As to quaternary structure, F-type ATPases have 2 components, CF(1) - the catalytic core - and CF(0) - the membrane proton channel. CF(1) has five subunits: alpha(3), beta(3), gamma(1), delta(1), epsilon(1). CF(0) has three main subunits: a(1), b(2) and c(9-12). The alpha and beta chains form an alternating ring which encloses part of the gamma chain. CF(1) is attached to CF(0) by a central stalk formed by the gamma and epsilon chains, while a peripheral stalk is formed by the delta and b chains.

It is found in the cell inner membrane. The enzyme catalyses ATP + H2O + 4 H(+)(in) = ADP + phosphate + 5 H(+)(out). Produces ATP from ADP in the presence of a proton gradient across the membrane. The alpha chain is a regulatory subunit. The protein is ATP synthase subunit alpha of Pseudomonas fluorescens (strain ATCC BAA-477 / NRRL B-23932 / Pf-5).